Reading from the N-terminus, the 269-residue chain is MPELPEVETSRRGIAPFLQGKTLSHLTVRQPRLRWPVSETLLTLRDRPILSVQRRAKYLLLELPEGWIVIHLGMSGSVRILPALTPPQKHDHIDLLLTDGMMLRYTDPRRFGAWLWYDSLATASVLAHLGPEPLSEAFSAEYLLEKARGRRTAVKPWLMDNTLVVGVGNIYASESLFSAQIHPDRLAGSLSADEAHLLVQTIKAVLQRSIDQGGTTLRDFLQADGKPGYFAQQLQVYGRAGEACLTCGTTIKRSKHGQRTTFYCPHCQR.

The active-site Schiff-base intermediate with DNA is the Pro-2. Catalysis depends on Glu-3, which acts as the Proton donor. Catalysis depends on Lys-57, which acts as the Proton donor; for beta-elimination activity. Positions 90, 109, and 150 each coordinate DNA. An FPG-type zinc finger spans residues 235 to 269 (QVYGRAGEACLTCGTTIKRSKHGQRTTFYCPHCQR). The active-site Proton donor; for delta-elimination activity is the Arg-259.

The protein belongs to the FPG family. Monomer. The cofactor is Zn(2+).

The catalysed reaction is Hydrolysis of DNA containing ring-opened 7-methylguanine residues, releasing 2,6-diamino-4-hydroxy-5-(N-methyl)formamidopyrimidine.. The enzyme catalyses 2'-deoxyribonucleotide-(2'-deoxyribose 5'-phosphate)-2'-deoxyribonucleotide-DNA = a 3'-end 2'-deoxyribonucleotide-(2,3-dehydro-2,3-deoxyribose 5'-phosphate)-DNA + a 5'-end 5'-phospho-2'-deoxyribonucleoside-DNA + H(+). In terms of biological role, involved in base excision repair of DNA damaged by oxidation or by mutagenic agents. Acts as a DNA glycosylase that recognizes and removes damaged bases. Has a preference for oxidized purines, such as 7,8-dihydro-8-oxoguanine (8-oxoG). Has AP (apurinic/apyrimidinic) lyase activity and introduces nicks in the DNA strand. Cleaves the DNA backbone by beta-delta elimination to generate a single-strand break at the site of the removed base with both 3'- and 5'-phosphates. The sequence is that of Formamidopyrimidine-DNA glycosylase from Edwardsiella ictaluri (strain 93-146).